The sequence spans 926 residues: DNA topoisomerase 3-alpha (926 aa).

One can recognise a Toprim domain in the interval 10–154; it reads TVLNVAEKPS…NLFIRRAHFS (145 aa). 3 residues coordinate Mg(2+): Glu-16, Asp-123, and Asp-125. One can recognise a Topo IA-type catalytic domain in the interval 172 to 604; sequence NQLFAEAVDA…CLQQMKACFL (433 aa). Positions 219–224 are interaction with DNA; sequence SYGPCQ. The active-site O-(5'-phospho-DNA)-tyrosine intermediate is the Tyr-342. Residues 642 to 670 form a C4-type zinc finger; sequence CNLCNESDMALRKNRDGNFMVGCMNYPQC. 2 disordered regions span residues 740 to 760 and 775 to 806; these read SRSQARRTPGTAPSNNIQGSN and HASTNCPSRVPASRNSRPTATNPRNDESTVSC. Residues 750 to 760 are compositionally biased toward polar residues; the sequence is TAPSNNIQGSN. A CCHC-type 1 zinc finger spans residues 767–782; that stretch reads CIHCQQRGHASTNCPS. Residues Cys-806, Cys-809, Cys-831, and Cys-836 each coordinate Zn(2+). A GRF-type zinc finger spans residues 806-845; sequence CNTCGSQCVLRTANTEANRGRQFFSCPTQGCSFFAWEDSI. The interval 849–890 is disordered; sequence SGNATTGSNSGGSGRRGSRGRGRGGRGGQSSGGRRGSGTSFV. A compositionally biased stretch (gly residues) spans 873–884; the sequence is GRGGQSSGGRRG. Residues 901–917 form a CCHC-type 2 zinc finger; it reads RCFSCGDPSHFANACPN.

This sequence belongs to the type IA topoisomerase family. As to quaternary structure, component of the RMI complex, containing at least TOP3A and RMI1. The RMI complex interacts with RECQL4A. It depends on Mg(2+) as a cofactor.

The catalysed reaction is ATP-independent breakage of single-stranded DNA, followed by passage and rejoining.. Functionally, releases the supercoiling and torsional tension of DNA introduced during the DNA replication and transcription by transiently cleaving and rejoining one strand of the DNA duplex. Introduces a single-strand break via transesterification at a target site in duplex DNA. The scissile phosphodiester is attacked by the catalytic tyrosine of the enzyme, resulting in the formation of a DNA-(5'-phosphotyrosyl)-enzyme intermediate and the expulsion of a 3'-OH DNA strand. The free DNA strand then undergoes passage around the unbroken strand thus removing DNA supercoils. Finally, in the religation step, the DNA 3'-OH attacks the covalent intermediate to expel the active-site tyrosine and restore the DNA phosphodiester backbone. Essential component of the RMI complex, a complex that plays an important role in the resolution step of homologous recombination, in a process called Holliday Junction dissolution, to limit DNA crossover formation in cells. Together with RMI1, is essential for the resolution of meiotic recombination intermediates, a step that prevents entanglement of the parental chromosomes. May have DNA decatenation activity. This chain is DNA topoisomerase 3-alpha (TOP3A), found in Arabidopsis thaliana (Mouse-ear cress).